The sequence spans 115 residues: Ig heavy chain V-III region W3082 (115 aa).

Residues 1 to 114 form the Ig-like domain; it reads EVKLEESGGG…WGQGTLVTVS (114 aa). C22 and C98 form a disulfide bridge.

In Mus musculus (Mouse), this protein is Ig heavy chain V-III region W3082.